The following is a 20-amino-acid chain: Thrombin-like enzyme Cdc SII (20 aa).

It belongs to the peptidase S1 family. Snake venom subfamily. Monomer. Expressed by the venom gland.

It is found in the secreted. Its activity is regulated as follows. Strongly inhibited by PMSF and moderately inhibited by leupeptin. Not inhibited by EDTA, aprotinin, pepstatin, and bestatin. In terms of biological role, thrombin-like snake venom serine protease that coagulates human plasma and bovine fibrinogen by hydrolysis of the alpha chains (FGA) (minimum coagulation dose is 60 ug on fibrinogen). Has fibrinogenolytic activities, and degrades preferentially the Aalpha chain (FGA). Shows amidolytic activity toward N-benzoyl-L-Arg-p-nitroanilide, has a higher activity than Cdc SI. In vivo, intravenous injection induces defibrin(ogen)ation and a loss of the righting reflex and opisthotoxins, together with a typical gyroxin-like effect (18-20 minutes). Subcutaneous injection into the footpads induces moderate edema. Potentiates local hemorrhagic activity induced by metalloproteinases (BaP1). The sequence is that of Thrombin-like enzyme Cdc SII from Crotalus durissus cumanensis (South American rattlesnake).